A 236-amino-acid chain; its full sequence is Transmembrane protein 65 (236 aa).

A mitochondrion-targeting transit peptide spans 1 to 57 (MSRLLPLLRSRTARSLRPGPAAAAAPRPPSWCCCGRGLLALAAPGGPRALGTHPKKE). The Cytoplasmic portion of the chain corresponds to 58–106 (PIEALNTAQGARDFIYSLHSSERSCLLKELHRFESIAIAQEKLEAQPPT). The chain crosses the membrane as a helical span at residues 107 to 127 (PGQLRYVFIHNAIPFIGFGFL). Topologically, residues 128–138 (DNAIMIVAGTH) are extracellular. A helical transmembrane segment spans residues 139 to 161 (IELSIGIILGISTMAAAALGNLV). At 162–205 (SDLAGLGLAGYVEALASRLGLSIPDLSPKQVDMWQTRVSSHLGK) the chain is on the cytoplasmic side. Residues 206–226 (AVGVTIGCILGMFPLIFFGGG) form a helical membrane-spanning segment. The Extracellular portion of the chain corresponds to 227-236 (EDDEKLEKKN).

As to quaternary structure, monomer. Homodimer. Interacts with GJA1. Interacts weakly with DSP. Interacts with SCN1B.

It is found in the cell membrane. The protein localises to the mitochondrion inner membrane. Its function is as follows. Essential for maintaining proper cardiac intercalated disk (ICD) structure and function as well as cardiac conduction velocity in the heart. Its association with SCN1B is required for stabilizing the perinexus in the ICD and for localization of GJA1 and SCN5A to the ICD. May regulate the function of the gap junction protein GJA1 and may contribute to the stability and proper localization of GJA1 to cardiac intercalated disk thereby regulating gap junction communication. Regulates mitochondrial respiration and mitochondrial DNA copy number maintenance. This Bos taurus (Bovine) protein is Transmembrane protein 65 (TMEM65).